Consider the following 444-residue polypeptide: NAD(+)--protein-arginine ADP-ribosyltransferase Tre1 (444 aa).

Residues P72–I140 form a PAAR domain region. The TR mART core domain maps to M266–P444. An ART domain region spans residues Q274 to P444. Residues R356, S381, and E415 contribute to the active site.

It belongs to the Arg-specific ADP-ribosyltransferase family. As to quaternary structure, forms a stable complex with cognate immunity protein Tri1-Sp.

It localises to the secreted. Its subcellular location is the host cytoplasm. The catalysed reaction is L-arginyl-[protein] + NAD(+) = N(omega)-(ADP-D-ribosyl)-L-arginyl-[protein] + nicotinamide + H(+). Functionally, toxic component of a contact-dependent interbacterial competition system (also called effector-immunity systems). Acts by ADP-ribosylating a number of target proteins in target cells; E.coli target proteins include FtsZ, EFTu, RNase E, Fis, RL9, SucB, and LolD. FtsZ is thought to be the physiologically relevant target as it is ADP-ribosylated on a critical residue. ADP-ribosylation of FtsZ prevents formation of the FtsZ mid-cell ring and inhibits cell division. Overexpression of the whole Tre1 protein or the ART domain in E.coli is toxic; cells elongate dramatically and some undergo lysis. Toxic activity is neutralized by coexpression of the cognate immunity protein Tri1-Sp; Tri1-Sp neutralizes this protein both by binding to and occluding the active site (via Tri1's N-terminal extension) and by hydrolysis of the ADP-ribosyl moiety from the target protein. Tre1 can also be neutralized by non-cognate immunity protein Tri1-Pp from P.putida strain GB-1, with which it does not form a stable complex; DraG of R.palustris does not neutralize the toxic effects of this protein. In interbacterial competition studies Tri1 from P.putida strain B6-2 also neutralizes this protein. This Serratia proteamaculans (strain 568) protein is NAD(+)--protein-arginine ADP-ribosyltransferase Tre1.